Here is a 150-residue protein sequence, read N- to C-terminus: Large ribosomal subunit protein bL9 (150 aa).

Belongs to the bacterial ribosomal protein bL9 family.

Functionally, binds to the 23S rRNA. The polypeptide is Large ribosomal subunit protein bL9 (Cupriavidus taiwanensis (strain DSM 17343 / BCRC 17206 / CCUG 44338 / CIP 107171 / LMG 19424 / R1) (Ralstonia taiwanensis (strain LMG 19424))).